The primary structure comprises 121 residues: uncharacterized protein (121 aa).

2 disordered regions span residues 1–28 (MGCASAKHVATVQNEEEAQKGKNYQNGD) and 60–82 (QENLEKSASSNVRLKTNKEVPGL). 2 positions are modified to phosphoserine: S95 and S115.

Expressed in spleen, prostate, testis and uterus.

This is an uncharacterized protein from Homo sapiens (Human).